A 243-amino-acid chain; its full sequence is Triosephosphate isomerase (243 aa).

Substrate is bound at residue 9–11 (NWK). The active-site Electrophile is histidine 96. Glutamate 165 serves as the catalytic Proton acceptor. Residues glycine 171, serine 204, and 225-226 (GG) each bind substrate.

The protein belongs to the triosephosphate isomerase family. Homodimer.

It localises to the cytoplasm. The catalysed reaction is D-glyceraldehyde 3-phosphate = dihydroxyacetone phosphate. The protein operates within carbohydrate biosynthesis; gluconeogenesis. Its pathway is carbohydrate degradation; glycolysis; D-glyceraldehyde 3-phosphate from glycerone phosphate: step 1/1. Functionally, involved in the gluconeogenesis. Catalyzes stereospecifically the conversion of dihydroxyacetone phosphate (DHAP) to D-glyceraldehyde-3-phosphate (G3P). The chain is Triosephosphate isomerase from Prochlorococcus marinus (strain MIT 9313).